Reading from the N-terminus, the 410-residue chain is Multifunctional CCA protein (410 aa).

Positions 8 and 11 each coordinate ATP. CTP-binding residues include Gly-8 and Arg-11. The Mg(2+) site is built by Asp-21 and Asp-23. Positions 91, 138, and 141 each coordinate ATP. 3 residues coordinate CTP: Arg-91, Arg-138, and Arg-141. One can recognise an HD domain in the interval 229–347 (TGIHQEMVSD…AQLALVCEAD (119 aa)).

The protein belongs to the tRNA nucleotidyltransferase/poly(A) polymerase family. Bacterial CCA-adding enzyme type 1 subfamily. Monomer. Can also form homodimers and oligomers. The cofactor is Mg(2+). Requires Ni(2+) as cofactor.

The enzyme catalyses a tRNA precursor + 2 CTP + ATP = a tRNA with a 3' CCA end + 3 diphosphate. It carries out the reaction a tRNA with a 3' CCA end + 2 CTP + ATP = a tRNA with a 3' CCACCA end + 3 diphosphate. Catalyzes the addition and repair of the essential 3'-terminal CCA sequence in tRNAs without using a nucleic acid template. Adds these three nucleotides in the order of C, C, and A to the tRNA nucleotide-73, using CTP and ATP as substrates and producing inorganic pyrophosphate. tRNA 3'-terminal CCA addition is required both for tRNA processing and repair. Also involved in tRNA surveillance by mediating tandem CCA addition to generate a CCACCA at the 3' terminus of unstable tRNAs. While stable tRNAs receive only 3'-terminal CCA, unstable tRNAs are marked with CCACCA and rapidly degraded. This chain is Multifunctional CCA protein, found in Xanthomonas euvesicatoria pv. vesicatoria (strain 85-10) (Xanthomonas campestris pv. vesicatoria).